The sequence spans 232 residues: Large ribosomal subunit protein uL1 (232 aa).

Belongs to the universal ribosomal protein uL1 family. In terms of assembly, part of the 50S ribosomal subunit.

Its function is as follows. Binds directly to 23S rRNA. The L1 stalk is quite mobile in the ribosome, and is involved in E site tRNA release. In terms of biological role, protein L1 is also a translational repressor protein, it controls the translation of the L11 operon by binding to its mRNA. In Rhizobium meliloti (strain 1021) (Ensifer meliloti), this protein is Large ribosomal subunit protein uL1.